Consider the following 308-residue polypeptide: Thiohydrolase (308 aa).

It belongs to the polyketide transferase af380 family.

The protein operates within mycotoxin biosynthesis. In terms of biological role, thiohydrolase; part of the gene cluster that mediates the biosynthesis of brefeldin A (BFA), a protein transport inhibitor that shows antiviral, antifungal, and antitumor properties. The proposed biosynthesis of BFA involves formation of an acyclic polyketide chain that is differentially tailored throughout the backbone. The highly reducing polyketide synthase Bref-PKS is proposed to synthesize the precisely reduced octaketide precursor, which could then be directly offloaded by the thiohydrolase enzyme Bref-TH followed by a cytochrome P450 monooxygenase-mediated formation of the cyclopentane ring and macrocyclization to afford 7-deoxy BFA. Alternatively, the first ring annulation can also occur on the ACP-tethered intermediate before the thiohydrolase release and lactonization. The C7-hydroxylation by another cytochrome P450 monooxygenase is believed to be the final step in the process to obtain the final structure of BFA. In addition to the HRPKS Bref-PKS and the thiohydrolase Bref-TH, the brefeldin A biosynthesis cluster contains 4 cytochrome p450 monooxygenases (called orf3 to orf6), as well a the probable cluster-specific transcription regulator orf8. This Eupenicillium brefeldianum (Penicillium brefeldianum) protein is Thiohydrolase.